Reading from the N-terminus, the 923-residue chain is Neuropilin-1a (923 aa).

The N-terminal stretch at 1 to 19 (MHCGLVLILFTGIFLIVSA) is a signal peptide. The Extracellular portion of the chain corresponds to 20 to 856 (LKNDKCGDNI…AGNMLKTLDP (837 aa)). Intrachain disulfides connect Cys-25-Cys-52, Cys-80-Cys-102, and Cys-145-Cys-171. CUB domains are found at residues 25–139 (CGDN…YEIF) and 145–263 (CSRN…FTVL). Asn-148 is a glycosylation site (N-linked (GlcNAc...) asparagine). Residues Glu-193, Asp-207, and Asp-248 each coordinate Ca(2+). Cys-204 and Cys-226 form a disulfide bridge. A glycan (N-linked (GlcNAc...) asparagine) is linked at Asn-259. 2 cysteine pairs are disulfide-bonded: Cys-273–Cys-422 and Cys-429–Cys-581. F5/8 type C domains lie at 273–422 (CTEP…VYGC) and 429–581 (CSGM…LLGC). N-linked (GlcNAc...) asparagine glycosylation occurs at Asn-520. The tract at residues 587–624 (TVPPTTPAASTTPSDECDDDQANCHSGTGDGYDQTGGT) is disordered. The O-linked (Xyl...) (chondroitin sulfate) serine; alternate glycan is linked to Ser-612. O-linked (Xyl...) (heparan sulfate) serine; alternate glycosylation is present at Ser-612. Positions 642-811 (FACDFGWAND…DNVNMADCKD (170 aa)) constitute an MAM domain. The chain crosses the membrane as a helical span at residues 857–877 (ILITIIAMSALGVFLGAICGV). Over 878-923 (VLYCACSHSGMSDRNLSALENYNFELVDGVKLKKDKLNSQNSYSEA) the chain is Cytoplasmic.

Belongs to the neuropilin family.

The protein resides in the membrane. Its function is as follows. Receptor involved in the development of the cardiovascular system, in angiogenesis, in the formation of certain neuronal circuits and in organogenesis outside the nervous system. It mediates the chemorepulsant activity of semaphorins. Regulates angiogenesis through a VEGF-dependent pathway. The chain is Neuropilin-1a (nrp1a) from Danio rerio (Zebrafish).